We begin with the raw amino-acid sequence, 588 residues long: MKLKYLVSAMALVVLSSGTAMAKTPDMGSFHADMGSCQSCHAKPIKVTDSETHENAQCKSCHGEYAELANDKLQFDPHNSHLGDINCTSCHKGHEEPKFYCNECHSFDIKPMPFSDAKKKKSWDDGWDQDKIQKAIAAGPSETTQVLVVGAGSAGFNASLAAKKAGANVILVDKAPFSGGNSMISAGGMNAVGTKQQTAHGVEDKVEWFIEDAMKGGRQQNDIKLVTILAEQSADGVQWLESLGANLDDLKRSGGARVDRTHRPHGGKSSGPEIIDTLRKAAKEQGIDTRLNSRVVKLVVNDDHSVVGAVVHGKHTGYYMIGAKSVVLATGGYGMNKEMIAYYRPTMKDMTSSNNITATGDGVLMAKEIGASMTDIDWVQAHPTVGKDSRILISETVRGVGAVMVNKDGNRFISELTTRDKASDAILKQPGQFAWIIFDNQLYKKAKMVRGYDHLEMLYKGDTVEQLAKSTGMKVADLAKTVSDYNGYVASGKDTAFGRADMPLNMTQSPYYAVKVAPGIHHTMGGVAINTTASVLDLQSKPIDGLFAAGEVTGGVHGYNRLGGNAIADTVVFGRIAGDNAAKHALDK.

An N-terminal signal peptide occupies residues 1-22; the sequence is MKLKYLVSAMALVVLSSGTAMA. 17 residues coordinate heme c: histidine 31, cysteine 37, cysteine 40, histidine 41, cysteine 58, cysteine 61, histidine 62, histidine 78, histidine 81, cysteine 87, cysteine 90, histidine 91, glycine 93, histidine 94, cysteine 101, cysteine 104, and histidine 105. The tract at residues 135–588 is flavoprotein-like; that stretch reads AIAAGPSETT…DNAAKHALDK (454 aa). Residues alanine 154, aspartate 173, asparagine 181, serine 182, glycine 187, and glycine 188 each coordinate FAD. Glycine 187 contributes to the fumarate binding site. Residue glycine 187 coordinates succinate. Heme c is bound at residue arginine 218. Residues valine 295 and aspartate 361 each coordinate FAD. Succinate contacts are provided by histidine 382, serine 394, and glutamate 395. Positions 394 and 395 each coordinate fumarate. Arginine 419 functions as the Proton donor in the catalytic mechanism. Residue histidine 521 coordinates fumarate. Histidine 521 contributes to the succinate binding site. Glutamate 551 serves as a coordination point for FAD. The fumarate site is built by arginine 561 and glycine 564. Succinate contacts are provided by arginine 561 and glycine 564. The FAD site is built by glycine 564, alanine 566, and isoleucine 567.

In terms of assembly, homodimer. Requires FAD as cofactor. It depends on heme c as a cofactor.

The protein resides in the periplasm. In terms of biological role, flavocytochrome that catalyzes the reduction of fumarate to succinate in vitro. Is essentially unidirectional, catalyzing only fumarate reduction. In vitro, can use the artificial electron donor methyl viologen. May be involved in an alternative route for electron transport to Fe(3+). The sequence is that of Probable fumarate reductase Ifc3 from Shewanella frigidimarina (strain NCIMB 400).